The sequence spans 192 residues: Thymidylate kinase (192 aa).

Glycine 7–serine 14 provides a ligand contact to ATP.

This sequence belongs to the thymidylate kinase family.

The catalysed reaction is dTMP + ATP = dTDP + ADP. Phosphorylation of dTMP to form dTDP in both de novo and salvage pathways of dTTP synthesis. In Campylobacter jejuni subsp. jejuni serotype O:23/36 (strain 81-176), this protein is Thymidylate kinase.